A 952-amino-acid chain; its full sequence is UvrABC system protein A (952 aa).

31–38 (GVSGSGKS) contributes to the ATP binding site. Residues 253–280 (CPEHGSVLEELEPRIFSFNSPYGACPAC) form a C4-type zinc finger. ABC transporter domains follow at residues 309–591 (WSRG…PQSL) and 611–938 (GNGK…AFLA). 643–650 (GPSGSGKS) serves as a coordination point for ATP. A C4-type zinc finger spans residues 742-768 (CEACGGDGTVKIEMLFLPDLYVPCEVC).

It belongs to the ABC transporter superfamily. UvrA family. As to quaternary structure, forms a heterotetramer with UvrB during the search for lesions.

It localises to the cytoplasm. Functionally, the UvrABC repair system catalyzes the recognition and processing of DNA lesions. UvrA is an ATPase and a DNA-binding protein. A damage recognition complex composed of 2 UvrA and 2 UvrB subunits scans DNA for abnormalities. When the presence of a lesion has been verified by UvrB, the UvrA molecules dissociate. This chain is UvrABC system protein A, found in Thermus thermophilus (strain ATCC 27634 / DSM 579 / HB8).